Reading from the N-terminus, the 188-residue chain is Elongation factor P (188 aa).

An N6-(3,6-diaminohexanoyl)-5-hydroxylysine modification is found at Lys-34.

Belongs to the elongation factor P family. In terms of processing, may be beta-lysylated on the epsilon-amino group of Lys-34 by the combined action of EpmA and EpmB, and then hydroxylated on the C5 position of the same residue by EpmC (if this protein is present). Lysylation is critical for the stimulatory effect of EF-P on peptide-bond formation. The lysylation moiety may extend toward the peptidyltransferase center and stabilize the terminal 3-CCA end of the tRNA. Hydroxylation of the C5 position on Lys-34 may allow additional potential stabilizing hydrogen-bond interactions with the P-tRNA.

The protein localises to the cytoplasm. It functions in the pathway protein biosynthesis; polypeptide chain elongation. In terms of biological role, involved in peptide bond synthesis. Alleviates ribosome stalling that occurs when 3 or more consecutive Pro residues or the sequence PPG is present in a protein, possibly by augmenting the peptidyl transferase activity of the ribosome. Modification of Lys-34 is required for alleviation. The polypeptide is Elongation factor P (Sodalis glossinidius (strain morsitans)).